Reading from the N-terminus, the 874-residue chain is Coatomer subunit gamma-1 (874 aa).

A compositionally biased stretch (basic and acidic residues) spans 1–11 (MLKKFDKKDEE). The tract at residues 1 to 21 (MLKKFDKKDEESGGGSNPLQH) is disordered. HEAT repeat units follow at residues 64–101 (TEAT…IAED), 283–320 (KELA…KHPS), 322–355 (VTAC…GSES), and 356–392 (SIDR…KYPR). A Phosphothreonine modification is found at T594. An interaction with ZNF289/ARFGAP2 region spans residues 609-874 (RQEIFQEQLA…PVDIILASVG (266 aa)).

Belongs to the COPG family. In terms of assembly, oligomeric complex that consists of at least the alpha, beta, beta', gamma, delta, epsilon and zeta subunits. Interacts with ZNF289/ARFGAP2 through its C-terminal appendage domain. Interacts with EGFR upon EGF treatment; interaction is essential for regulation of EGF-dependent nuclear transport of EGFR by retrograde trafficking from the Golgi to the ER. The coatomer interacts with KDEL receptors; the interaction is important for retrograde trafficking of KDEL-bearing proteins from the Golgi to the endoplasmic reticulum. Interacts with COPB1. Interacts with TMED10 (via C-terminus). Interacts with TMED2, TMED3, TMED7 and TMED9.

The protein localises to the cytoplasm. Its subcellular location is the cytosol. It localises to the golgi apparatus membrane. It is found in the cytoplasmic vesicle. The protein resides in the COPI-coated vesicle membrane. In terms of biological role, the coatomer is a cytosolic protein complex that binds to dilysine motifs and reversibly associates with Golgi non-clathrin-coated vesicles, which further mediate biosynthetic protein transport from the ER, via the Golgi up to the trans Golgi network. Coatomer complex is required for budding from Golgi membranes, and is essential for the retrograde Golgi-to-ER transport of dilysine-tagged proteins. In mammals, the coatomer can only be recruited by membranes associated to ADP-ribosylation factors (ARFs), which are small GTP-binding proteins; the complex also influences the Golgi structural integrity, as well as the processing, activity, and endocytic recycling of LDL receptors. Required for limiting lipid storage in lipid droplets. Involved in lipid homeostasis by regulating the presence of perilipin family members PLIN2 and PLIN3 at the lipid droplet surface and promoting the association of adipocyte triglyceride lipase (PNPLA2) with the lipid droplet surface to mediate lipolysis. This Rattus norvegicus (Rat) protein is Coatomer subunit gamma-1 (Copg1).